The following is a 185-amino-acid chain: Dual-action ribosomal maturation protein DarP (185 aa).

Positions 1–22 (MWKNGAMRGCNKETGEFLGPSR) are disordered.

It belongs to the DarP family.

The protein localises to the cytoplasm. In terms of biological role, member of a network of 50S ribosomal subunit biogenesis factors which assembles along the 30S-50S interface, preventing incorrect 23S rRNA structures from forming. Promotes peptidyl transferase center (PTC) maturation. In Xylella fastidiosa (strain 9a5c), this protein is Dual-action ribosomal maturation protein DarP.